Reading from the N-terminus, the 50-residue chain is Large ribosomal subunit protein bL33 (50 aa).

This sequence belongs to the bacterial ribosomal protein bL33 family.

This Endomicrobium trichonymphae protein is Large ribosomal subunit protein bL33.